The chain runs to 439 residues: UPF0489 protein C5orf22 homolog (439 aa).

Residues 163-219 (TTKLENGQSGAKIPKAAQTQDDMQSKADTPCTSSSQPPDGSAASGNISETAKKKADD) are disordered. A compositionally biased stretch (polar residues) spans 179 to 211 (AQTQDDMQSKADTPCTSSSQPPDGSAASGNISE).

It belongs to the UPF0489 family.

This Danio rerio (Zebrafish) protein is UPF0489 protein C5orf22 homolog.